A 279-amino-acid polypeptide reads, in one-letter code: Four and a half LIM domains protein 2 (279 aa).

The C4-type zinc finger occupies 7 to 31 (CHHCEDSLFGRKYVLREEQPYCVAC). LIM zinc-binding domains are found at residues 40 to 92 (CEEC…CTDC), 101 to 153 (CQEC…CVPC), and 162 to 212 (CVQC…CLGC). Residue Lys-78 forms a Glycyl lysine isopeptide (Lys-Gly) (interchain with G-Cter in SUMO2) linkage. Glycyl lysine isopeptide (Lys-Gly) (interchain with G-Cter in SUMO2) cross-links involve residues Lys-167 and Lys-220. Residues 221-275 (CAGCANPISGLGGTKYISFEERQWHNDCFNCKKCSLSLVGRGFLTERDDILCPDC) form the LIM zinc-binding 4 domain. The residue at position 238 (Ser-238) is a Phosphoserine.

In terms of assembly, interacts with ZNF638 and TTN/titin. Interacts with E4F1. Interacts with GRB7. Interacts with SIRT1 and FOXO1. Interacts with CEFIP and calcineurin. Interacts with FOXK1.

It localises to the cytoplasm. The protein localises to the nucleus. The protein resides in the myofibril. Its subcellular location is the sarcomere. It is found in the z line. Its function is as follows. May function as a molecular transmitter linking various signaling pathways to transcriptional regulation. Negatively regulates the transcriptional repressor E4F1 and may function in cell growth. Inhibits the transcriptional activity of FOXO1 and its apoptotic function by enhancing the interaction of FOXO1 with SIRT1 and FOXO1 deacetylation. Negatively regulates the calcineurin/NFAT signaling pathway in cardiomyocytes. The chain is Four and a half LIM domains protein 2 (FHL2) from Bos taurus (Bovine).